The sequence spans 472 residues: DEAD-box ATP-dependent RNA helicase 58, chloroplastic (472 aa).

Residues 1-54 (MASQLLNVPHLAFFPKISYASVFSTLKPSFFHSTSTRRALKSSPSSRIINLQAV) constitute a chloroplast transit peptide. Residues 76–104 (RQICQGFVPEHILHRMEEIGFVFPTDIQR) carry the Q motif motif. One can recognise a Helicase ATP-binding domain in the interval 107–286 (LPTLFTGRDC…DCIQQKWTKR (180 aa)). ATP is bound at residue 120-127 (AQTGSGKT). Residues 231–234 (DEVD) carry the DEAD box motif. The region spanning 314–472 (NKHQVLLALL…LMFSCEEMML (159 aa)) is the Helicase C-terminal domain.

Belongs to the DEAD box helicase family.

It is found in the plastid. The protein resides in the chloroplast. The enzyme catalyses ATP + H2O = ADP + phosphate + H(+). This is DEAD-box ATP-dependent RNA helicase 58, chloroplastic (RH58) from Arabidopsis thaliana (Mouse-ear cress).